The primary structure comprises 398 residues: Ureide permease 2 (398 aa).

The Extracellular segment spans residues M1–A10. Residues I11–L31 traverse the membrane as a helical segment. Residues E32–D44 are Cytoplasmic-facing. Residues Y45–S65 traverse the membrane as a helical segment. Topologically, residues T66–N81 are extracellular. Residues W82–T102 form a helical membrane-spanning segment. The Cytoplasmic portion of the chain corresponds to Q103–Y104. A helical membrane pass occupies residues A105–I125. Residues G126–K139 are Extracellular-facing. Residues A140 to V160 traverse the membrane as a helical segment. Over H161–K229 the chain is Cytoplasmic. The disordered stretch occupies residues E176–N200. Polar residues predominate over residues S183–N200. ATP is bound at residue A221–R228. A helical transmembrane segment spans residues I230 to F250. Topologically, residues N251 to T272 are extracellular. Residues A273–L293 form a helical membrane-spanning segment. Residues Y294–R315 lie on the Cytoplasmic side of the membrane. The chain crosses the membrane as a helical span at residues Y316–G336. The Extracellular portion of the chain corresponds to Q337–Y341. The helical transmembrane segment at A342 to F362 threads the bilayer. Over G363–K371 the chain is Cytoplasmic. The helical transmembrane segment at T372 to A392 threads the bilayer. Residues S393–K398 are Extracellular-facing.

The protein belongs to the plant ureide permease (TC 2.A.7.19) family. Expressed in root xylem, cotyledons and leaves. Expressed in leaf blades, petioles, trichomes, stems, flower stigma, the upper part of pedicels, sepals, and the top and bottom parts of carpels in siliques.

The protein resides in the membrane. Proton-coupled transporter that transports a wide spectrum of oxo derivatives of heterocyclic nitrogen compounds, including allantoin, uric acid and xanthine, but not adenine. Mediates high affinity transport of uracil and 5-fluorouracil (a toxic uracil analog). Mediates transport of free pyrimidines and may function during early seedling development in salvage pathways, by the utilization of pyrimidines from seed storage tissue. The sequence is that of Ureide permease 2 from Arabidopsis thaliana (Mouse-ear cress).